The sequence spans 816 residues: Phosphatidylinositol 4-kinase beta (816 aa).

3 disordered regions span residues 1–30, 99–120, and 248–318; these read MGDTVVEPAPLKPTSEPTSGPPGNNGGSLL, EEEDEMGASVASGTAKGARRRR, and AHRK…SFSS. Gly-2 bears the N-acetylglycine mark. An interaction with ACBD3 region spans residues 2–68; that stretch reads GDTVVEPAPL…VKLLHGGVAV (67 aa). Positions 52 to 242 constitute a PIK helical domain; that stretch reads CQDVLEKVKL…GTKLRKLILS (191 aa). Residue Ser-258 is modified to Phosphoserine. The residue at position 263 (Thr-263) is a Phosphothreonine. Residues Ser-266, Ser-275, Ser-277, Ser-284, and Ser-294 each carry the phosphoserine modification. Composition is skewed to polar residues over residues 278 to 297 and 306 to 318; these read DATASISLSSNLKRTASNPK and SSSTESIDNSFSS. Position 428 is a phosphoserine (Ser-428). Thr-438 carries the post-translational modification Phosphothreonine. Residue Ser-511 is modified to Phosphoserine. Thr-517 and Thr-519 each carry phosphothreonine. The PI3K/PI4K catalytic domain maps to 535–801; that stretch reads EPWQEKVRRI…MVDGSMRSIT (267 aa). Residues 541–547 are G-loop; sequence VRRIREG. Positions 668–676 are catalytic loop; sequence QVKDRHNGN. Residues 687 to 711 form an activation loop region; that stretch reads HIDFGFILSSSPRNLGFETSAFKLT.

The protein belongs to the PI3/PI4-kinase family. Type III PI4K subfamily. In terms of assembly, interacts with ARF1 and ARF3 in the Golgi complex, but not with ARF4, ARF5 or ARF6. Interacts with NCS1/FREQ in a calcium-independent manner. Interacts with CALN1/CABP8 and CALN2/CABP7; in a calcium-dependent manner; this interaction competes with NCS1/FREQ binding. Interacts with ACBD3. Interacts with ARMH3, YWHAB, YWHAE, YWHAG, YWHAH, YWHAQ, YWHAZ and SFN. Interacts with GGA2 (via VHS domain); the interaction is important for PI4KB location at the Golgi apparatus membrane. Interacts with ATG9A. Mg(2+) serves as cofactor. Requires Mn(2+) as cofactor.

Its subcellular location is the endomembrane system. It localises to the mitochondrion outer membrane. The protein localises to the rough endoplasmic reticulum membrane. The protein resides in the golgi apparatus. It is found in the golgi apparatus membrane. It carries out the reaction a 1,2-diacyl-sn-glycero-3-phospho-(1D-myo-inositol) + ATP = a 1,2-diacyl-sn-glycero-3-phospho-(1D-myo-inositol 4-phosphate) + ADP + H(+). With respect to regulation, inhibited by wortmannin. Increased kinase activity upon interaction with NCS1/FREQ. Its function is as follows. Phosphorylates phosphatidylinositol (PI) in the first committed step in the production of the second messenger inositol-1,4,5,-trisphosphate (PIP). May regulate Golgi disintegration/reorganization during mitosis, possibly via its phosphorylation. Involved in Golgi-to-plasma membrane trafficking. This chain is Phosphatidylinositol 4-kinase beta (PI4KB), found in Callithrix jacchus (White-tufted-ear marmoset).